The following is a 95-amino-acid chain: UPF0358 protein BT9727_3692 (95 aa).

Belongs to the UPF0358 family.

The polypeptide is UPF0358 protein BT9727_3692 (Bacillus thuringiensis subsp. konkukian (strain 97-27)).